Here is a 275-residue protein sequence, read N- to C-terminus: 1-deoxy-11-beta-hydroxypentalenate dehydrogenase (275 aa).

An NAD(+)-binding site is contributed by 12 to 36; sequence GAASGIGLALSARFARAGAGVVMAD. A substrate-binding site is contributed by Ser144. Tyr157 (proton acceptor) is an active-site residue. Lys161 serves as a coordination point for NAD(+).

This sequence belongs to the short-chain dehydrogenases/reductases (SDR) family.

It catalyses the reaction 1-deoxy-11beta-hydroxypentalenate + NAD(+) = 1-deoxy-11-oxopentalenate + NADH + H(+). Its pathway is antibiotic biosynthesis; pentalenolactone biosynthesis. In terms of biological role, catalyzes the oxidation of 1-deoxy-11-beta-hydroxypentalenic acid to 1-deoxy-11-oxopentalenic acid in the biosynthesis of pentalenolactone antibiotic. The chain is 1-deoxy-11-beta-hydroxypentalenate dehydrogenase (penF) from Streptomyces exfoliatus (Streptomyces hydrogenans).